The following is a 114-amino-acid chain: Large ribosomal subunit protein bL20c (114 aa).

It belongs to the bacterial ribosomal protein bL20 family.

Its subcellular location is the plastid. The protein localises to the chloroplast. Functionally, binds directly to 23S ribosomal RNA and is necessary for the in vitro assembly process of the 50S ribosomal subunit. It is not involved in the protein synthesizing functions of that subunit. In Trieres chinensis (Marine centric diatom), this protein is Large ribosomal subunit protein bL20c (rpl20).